A 760-amino-acid chain; its full sequence is Complement C2 (760 aa).

The N-terminal stretch at 1–18 (MAPLLALFYLLQLGPGLA) is a signal peptide. Sushi domains are found at residues 20–90 (LFCN…AVCK), 92–151 (VRCL…VCDN), and 154–212 (SHCP…ICRQ). Intrachain disulfides connect cysteine 22–cysteine 62, cysteine 49–cysteine 89, cysteine 94–cysteine 136, cysteine 122–cysteine 149, cysteine 156–cysteine 197, and cysteine 182–cysteine 210. 2 N-linked (GlcNAc...) asparagine glycosylation sites follow: asparagine 27 and asparagine 32. Asparagine 117 is a glycosylation site (N-linked (GlcNAc...) asparagine). A VWFA domain is found at 261–459 (NLYLLLDASQ…KALQQIFEHM (199 aa)). Residues 267 to 271 (DASQS) carry the MIDAS-like motif motif. Mg(2+) is bound by residues serine 269 and serine 271. N-linked (GlcNAc...) asparagine glycosylation is found at asparagine 297 and asparagine 340. Mg(2+) is bound at residue threonine 344. Intrachain disulfides connect cysteine 470–cysteine 590, cysteine 499–cysteine 515, cysteine 593–cysteine 609, cysteine 647–cysteine 674, and cysteine 685–cysteine 715. Residues 471-752 (GVGNMSANAS…LQPWLRQHLD (282 aa)) form the Peptidase S1 domain. N-linked (GlcNAc...) asparagine glycans are attached at residues asparagine 474 and asparagine 478. Active-site charge relay system residues include histidine 514 and aspartate 570. Asparagine 663 is a glycosylation site (N-linked (GlcNAc...) asparagine). Serine 689 serves as the catalytic Charge relay system.

Belongs to the peptidase S1 family. As to quaternary structure, serine protease component of the C3 convertase, also named C4bC2b, composed of the serine protease complement C2b and complement C4b. Serine protease component of the C5 convertase, also named C4bC2bC3b, composed of the serine protease complement C2b, complement C3b, as well as complement C4b. The cofactor is Mg(2+). Requires Mn(2+) as cofactor. Post-translationally, cleaved and activated by different proteases depending on the complement pathway to generate complement C2a and serine protease complement C2b chains. Cleaved and activated by C1S following activation by the classical complement system. Cleaved and activated by MASP2 following activation by the lectin complement system. Cleaved and activated by GZMK following activation by the GZMK complement system.

Its subcellular location is the secreted. It is found in the cell surface. The catalysed reaction is Selective cleavage of Arg-|-Ser bond in complement component C3 alpha-chain to form C3a and C3b, and Arg-|-Xaa bond in complement component C5 alpha-chain to form C5a and C5b.. Its function is as follows. Precursor of the catalytic component of the C3 and C5 convertase complexes, which are part of the complement pathway, a cascade of proteins that leads to phagocytosis and breakdown of pathogens and signaling that strengthens the adaptive immune system. Component C2 is part of the classical, lectin and GZMK complement systems. Functionally, catalytic component of the complement C3 and C5 convertase complexes. Following complement activation, recruited to the surface of pathogens by complement C4b opsonin to form the C3 convertase, or C3b and C4b opsonins to form the C5 convertase. As part of the C3 convertase, cleaves and activate C3 into C3a anaphylatoxin and C3b opsonin, the next components of the complement pathways. As part of the C5 convertase, cleaves and activate C5 into C5a anaphylatoxin and C5b component of the membrane attack complex. The sequence is that of Complement C2 from Mus musculus (Mouse).